The sequence spans 71 residues: uncharacterized protein (71 aa).

A helical membrane pass occupies residues 2–24; that stretch reads IIAIVAVVIFLLNFLTPYGYMPM. Positions 48 to 71 are disordered; it reads PAESSSNGGSMITKPSTGACQGGR. Polar residues predominate over residues 49–71; that stretch reads AESSSNGGSMITKPSTGACQGGR.

It localises to the membrane. This is an uncharacterized protein from Archaeoglobus fulgidus (strain ATCC 49558 / DSM 4304 / JCM 9628 / NBRC 100126 / VC-16).